The sequence spans 388 residues: Tetratricopeptide repeat protein 4 (388 aa).

N-acetylmethionine is present on Met1. The residue at position 51 (Ser51) is a Phosphoserine. TPR repeat units follow at residues 79–112 (ARTYKDEGNDYFKEKDYKKAVISYTEGLKKKCAD), 117–150 (AVLYTNRAAAQYYLGNFRSSLNDVTAARKLKPCH), and 151–184 (LKAIIRGASCHLELKNYVEAVNWCDEGLQIDATE). The residue at position 244 (Ser244) is a Phosphoserine.

The protein belongs to the TTC4 family. As to quaternary structure, interacts (via TPR repeats) with HSP90AB1. Interacts with HSPA8, CDC6, TBK1 and MSL1.

It localises to the nucleus. The protein localises to the nucleoplasm. It is found in the cytoplasm. Its function is as follows. May act as a co-chaperone for HSP90AB1. The protein is Tetratricopeptide repeat protein 4 (TTC4) of Bos taurus (Bovine).